The sequence spans 178 residues: Endothelin-2 (178 aa).

The N-terminal stretch at 1–24 (MPAPGVHHPNTASPFLKTVAAGKG) is a signal peptide. A propeptide spanning residues 25-46 (QVAAAPEHPAPSARARGSHLRP) is cleaved from the precursor. Cystine bridges form between Cys-49–Cys-63 and Cys-51–Cys-59. The propeptide occupies 70–178 (VNTPGQTAPY…RPTHPRRRKR (109 aa)). Residues 96-111 (CECSSGGDPACATFCH) form an endothelin-like region. Positions 156–178 (RFPRRPQEAGRQLRPTHPRRRKR) are disordered. The span at 169–178 (RPTHPRRRKR) shows a compositional bias: basic residues.

This sequence belongs to the endothelin/sarafotoxin family.

The protein localises to the secreted. Functionally, endothelins are endothelium-derived vasoconstrictor peptides. This is Endothelin-2 (EDN2) from Canis lupus familiaris (Dog).